A 679-amino-acid chain; its full sequence is Protein hook (679 aa).

One can recognise a Calponin-homology (CH) domain in the interval 5 to 123 (NGMYYSLLEW…RLLQLVLGCA (119 aa)). The stretch at 140–627 (EEELQANIMR…SKTKMSTMEE (488 aa)) forms a coiled coil.

It belongs to the hook family. As to quaternary structure, homodimer. Interacts with microtubules via its N-terminus.

The protein localises to the cytoplasm. It localises to the cytoskeleton. Its subcellular location is the endosome. It is found in the synapse. In terms of biological role, involved in endocytic trafficking by stabilizing organelles of the endocytic pathway. Probably acts as a cytoskeletal linker protein required to tether endosome vesicles to the cytoskeleton. Involved in modulation of endocytosis at stages required for down-regulation of membrane proteins that control synapse size. Not involved in synaptic vesicle recycling. Required in R7 cells for boss endocytosis into multivesicular bodies (MVBs). Has a role in regulating adult longevity. This is Protein hook from Drosophila mojavensis (Fruit fly).